The following is a 367-amino-acid chain: HTH-type transcriptional regulator GbdR (367 aa).

One can recognise an HTH araC/xylS-type domain in the interval Gln227–Gly325. 2 consecutive DNA-binding regions (H-T-H motif) follow at residues Asp244–Leu265 and Ile292–Phe315.

Specific regulator of choline metabolism, which activates transcription of at least 25 genes from 11 promoters in response to choline metabolites. Required for the induction of plcH, encoding the phospholipase C, and pchP, encoding the phosphorylcholine phosphatase, in response to glycine betaine (GB) and dimethylglycine (DMG). Also controls the expression of gbcAB and dgcAB, which are required for GB and DMG degradation, respectively, in response to both GB and DMG. The GbdR regulon also includes genes encoding sarcosine, glycine and serine catabolic enzymes, the BetX and CbcXWV quaternary amine transport proteins and the acetylcholine esterase gene, choE. Acts by binding directly to the promoter region of the genes. May play an important role during P.aeruginosa interactions with eukaryotes. The chain is HTH-type transcriptional regulator GbdR from Pseudomonas aeruginosa (strain UCBPP-PA14).